Consider the following 28-residue polypeptide: MTHIVRFIGLLLLNASSLRGRRVSGIQH.

Functionally, involved in control of the biosynthesis of leucine. The polypeptide is leu operon leader peptide (leuL) (Shigella flexneri).